The chain runs to 761 residues: Hyperosmolality-gated Ca2+ permeable channel 1.6 (761 aa).

10 consecutive transmembrane segments (helical) span residues isoleucine 7 to isoleucine 27, isoleucine 101 to valine 121, proline 156 to leucine 176, leucine 375 to valine 395, leucine 419 to phenylalanine 439, phenylalanine 467 to glutamine 487, alanine 512 to leucine 532, alanine 583 to valine 603, valine 630 to alanine 650, and serine 653 to asparagine 673. Over residues arginine 718–serine 731 the composition is skewed to basic and acidic residues. Residues arginine 718–proline 761 form a disordered region.

It belongs to the CSC1 (TC 1.A.17) family.

Its subcellular location is the membrane. Functionally, acts as an osmosensitive calcium-permeable cation channel. The protein is Hyperosmolality-gated Ca2+ permeable channel 1.6 of Arabidopsis thaliana (Mouse-ear cress).